The sequence spans 459 residues: tRNA modification GTPase MnmE (459 aa).

3 residues coordinate (6S)-5-formyl-5,6,7,8-tetrahydrofolate: Arg24, Glu82, and Lys122. The TrmE-type G domain occupies 219–379; it reads GIKVVISGAP…LRQHLYFSFK (161 aa). GTP is bound by residues 229 to 234, 248 to 254, and 273 to 276; these read NSGKSS, TNFPGTT, and DTAG. Mg(2+) contacts are provided by Ser233 and Thr254. Residue Lys459 coordinates (6S)-5-formyl-5,6,7,8-tetrahydrofolate.

The protein belongs to the TRAFAC class TrmE-Era-EngA-EngB-Septin-like GTPase superfamily. TrmE GTPase family. In terms of assembly, homodimer. Heterotetramer of two MnmE and two MnmG subunits. The cofactor is K(+).

Its subcellular location is the cytoplasm. Exhibits a very high intrinsic GTPase hydrolysis rate. Involved in the addition of a carboxymethylaminomethyl (cmnm) group at the wobble position (U34) of certain tRNAs, forming tRNA-cmnm(5)s(2)U34. The chain is tRNA modification GTPase MnmE from Buchnera aphidicola subsp. Baizongia pistaciae (strain Bp).